Reading from the N-terminus, the 749-residue chain is Patatin-like phospholipase domain-containing protein AN0408 (749 aa).

Residues 1-11 (MEKSAAGDNID) are compositionally biased toward basic and acidic residues. Positions 1–21 (MEKSAAGDNIDKYSPSSIPDY) are disordered. The helical transmembrane segment at 92 to 112 (WPFLLFVLGWITFLSVGYALT) threads the bilayer. Residues 280–471 (LCLSGGATFA…RTDIPIKALN (192 aa)) enclose the PNPLA domain. The GXSXG signature appears at 311 to 315 (GTSGG). The Nucleophile role is filled by Ser313. Catalysis depends on Asp458, which acts as the Proton acceptor. The disordered stretch occupies residues 630–659 (SIQPFPFDNGAAGADQKSNDPREERLNRNF). Residues 646 to 659 (KSNDPREERLNRNF) show a composition bias toward basic and acidic residues.

Belongs to the PLPL family.

Its subcellular location is the membrane. Functionally, probable lipid hydrolase. This is Patatin-like phospholipase domain-containing protein AN0408 from Emericella nidulans (strain FGSC A4 / ATCC 38163 / CBS 112.46 / NRRL 194 / M139) (Aspergillus nidulans).